The chain runs to 881 residues: Probable inorganic carbon transporter subunit DabA (881 aa).

C399, D401, H585, and C600 together coordinate Zn(2+).

This sequence belongs to the inorganic carbon transporter (TC 9.A.2) DabA family. In terms of assembly, forms a complex with DabB. Requires Zn(2+) as cofactor.

The protein localises to the cell membrane. Part of an energy-coupled inorganic carbon pump. This chain is Probable inorganic carbon transporter subunit DabA, found in Geobacillus sp. (strain WCH70).